Here is a 488-residue protein sequence, read N- to C-terminus: UDP-N-acetylmuramoyl-L-alanyl-D-glutamate--2,6-diaminopimelate ligase (488 aa).

UDP-N-acetyl-alpha-D-muramoyl-L-alanyl-D-glutamate is bound by residues L24, S26, and 41-43 (HQV). Position 113–119 (113–119 (GTNGKTT)) interacts with ATP. UDP-N-acetyl-alpha-D-muramoyl-L-alanyl-D-glutamate-binding positions include N154, 155-156 (TT), S182, Q188, and R190. N6-carboxylysine is present on K222. Meso-2,6-diaminopimelate is bound by residues R386, 410-413 (DNPR), G461, and E465. Residues 410-413 (DNPR) carry the Meso-diaminopimelate recognition motif motif.

Belongs to the MurCDEF family. MurE subfamily. Requires Mg(2+) as cofactor. In terms of processing, carboxylation is probably crucial for Mg(2+) binding and, consequently, for the gamma-phosphate positioning of ATP.

It is found in the cytoplasm. It catalyses the reaction UDP-N-acetyl-alpha-D-muramoyl-L-alanyl-D-glutamate + meso-2,6-diaminopimelate + ATP = UDP-N-acetyl-alpha-D-muramoyl-L-alanyl-gamma-D-glutamyl-meso-2,6-diaminopimelate + ADP + phosphate + H(+). It functions in the pathway cell wall biogenesis; peptidoglycan biosynthesis. Catalyzes the addition of meso-diaminopimelic acid to the nucleotide precursor UDP-N-acetylmuramoyl-L-alanyl-D-glutamate (UMAG) in the biosynthesis of bacterial cell-wall peptidoglycan. In Haemophilus influenzae (strain PittEE), this protein is UDP-N-acetylmuramoyl-L-alanyl-D-glutamate--2,6-diaminopimelate ligase.